The primary structure comprises 417 residues: Serine hydroxymethyltransferase (417 aa).

(6S)-5,6,7,8-tetrahydrofolate-binding positions include L121 and 125–127 (GHL). The residue at position 229 (K229) is an N6-(pyridoxal phosphate)lysine. 355 to 357 (SPF) contributes to the (6S)-5,6,7,8-tetrahydrofolate binding site.

This sequence belongs to the SHMT family. Homodimer. Pyridoxal 5'-phosphate serves as cofactor.

It is found in the cytoplasm. It catalyses the reaction (6R)-5,10-methylene-5,6,7,8-tetrahydrofolate + glycine + H2O = (6S)-5,6,7,8-tetrahydrofolate + L-serine. It functions in the pathway one-carbon metabolism; tetrahydrofolate interconversion. It participates in amino-acid biosynthesis; glycine biosynthesis; glycine from L-serine: step 1/1. In terms of biological role, catalyzes the reversible interconversion of serine and glycine with tetrahydrofolate (THF) serving as the one-carbon carrier. This reaction serves as the major source of one-carbon groups required for the biosynthesis of purines, thymidylate, methionine, and other important biomolecules. Also exhibits THF-independent aldolase activity toward beta-hydroxyamino acids, producing glycine and aldehydes, via a retro-aldol mechanism. This is Serine hydroxymethyltransferase from Shewanella amazonensis (strain ATCC BAA-1098 / SB2B).